The following is a 92-amino-acid chain: Small ribosomal subunit protein uS19 (92 aa).

The protein belongs to the universal ribosomal protein uS19 family.

In terms of biological role, protein S19 forms a complex with S13 that binds strongly to the 16S ribosomal RNA. The chain is Small ribosomal subunit protein uS19 from Acholeplasma laidlawii (strain PG-8A).